The following is a 359-amino-acid chain: DNA integrity scanning protein DisA (359 aa).

The DAC domain maps to 7–146 (DEVLRQTLAI…NRRYVLEGSD (140 aa)). Residues Gly74, Leu92, and 105–109 (TRHRT) each bind ATP.

This sequence belongs to the DisA family. In terms of assembly, homooctamer. Requires Mg(2+) as cofactor.

It carries out the reaction 2 ATP = 3',3'-c-di-AMP + 2 diphosphate. Participates in a DNA-damage check-point. DisA forms globular foci that rapidly scan along the chromosomes searching for lesions. In terms of biological role, also has diadenylate cyclase activity, catalyzing the condensation of 2 ATP molecules into cyclic di-AMP (c-di-AMP). c-di-AMP likely acts as a signaling molecule that may couple DNA integrity with a cellular process. The polypeptide is DNA integrity scanning protein DisA (Kineococcus radiotolerans (strain ATCC BAA-149 / DSM 14245 / SRS30216)).